The sequence spans 220 residues: Adenylate kinase (220 aa).

An ATP-binding site is contributed by glycine 12 to threonine 17. The NMP stretch occupies residues serine 32–valine 62. AMP is bound by residues threonine 33, arginine 38, glutamate 60–valine 62, glycine 88–arginine 91, and glutamine 95. The segment at serine 129–aspartate 166 is LID. Arginine 130 provides a ligand contact to ATP. Zn(2+)-binding residues include cysteine 133 and cysteine 136. Isoleucine 139 to tyrosine 140 provides a ligand contact to ATP. Zn(2+)-binding residues include cysteine 153 and cysteine 156. The AMP site is built by arginine 163 and arginine 174. Position 202 (isoleucine 202) interacts with ATP.

The protein belongs to the adenylate kinase family. Monomer.

The protein resides in the cytoplasm. It catalyses the reaction AMP + ATP = 2 ADP. Its pathway is purine metabolism; AMP biosynthesis via salvage pathway; AMP from ADP: step 1/1. Functionally, catalyzes the reversible transfer of the terminal phosphate group between ATP and AMP. Plays an important role in cellular energy homeostasis and in adenine nucleotide metabolism. In Thermotoga neapolitana, this protein is Adenylate kinase.